The primary structure comprises 203 residues: Urease accessory protein UreG (203 aa).

14-21 (GPVGSGKT) is a binding site for GTP.

The protein belongs to the SIMIBI class G3E GTPase family. UreG subfamily. As to quaternary structure, homodimer. UreD, UreF and UreG form a complex that acts as a GTP-hydrolysis-dependent molecular chaperone, activating the urease apoprotein by helping to assemble the nickel containing metallocenter of UreC. The UreE protein probably delivers the nickel.

The protein resides in the cytoplasm. Functionally, facilitates the functional incorporation of the urease nickel metallocenter. This process requires GTP hydrolysis, probably effectuated by UreG. This chain is Urease accessory protein UreG, found in Rhizobium etli (strain ATCC 51251 / DSM 11541 / JCM 21823 / NBRC 15573 / CFN 42).